A 1601-amino-acid chain; its full sequence is MMTPESKAIQPAAATTKQTAEATATTTMAHTQQKSQLSTLAKTTTTTATNKAAKSVVSNANSSGNNSSKKLALSQSQKTTTTTTPPTTTTTTTAAAAAEATTNADKMQKQQQLKQQLFAACSIKVKSENTLATTANAALAAATTTTTTATPALATGKAAKTILENGIKKESTPPAVESVEASSSSSSSSSSSSSSSSSWPTTRRATSEDASSNGGASADEEKSEEDPTAAVAASSTATTTSDLATTSRPRPVLLTAVNPHIICHLCQGYLINATTIVECLHSFCHSCLINHLRKERFCPRCEMVINNAKPNIKSDTTLQAIVYKLVPGLYERELMRKRAFYKDRPEEAALATPEQRGDDTEHLIFSPSDDMSLSLEYAELGELKTDSEPELVDTLRPRYLQCPAMCRVSHLKKFVYDKFEIDAQRFSIDIMYKVKTIVLLDYYTLMDIAYIYTWKRDAPMRFYYRVYESPQPLVKPAPRRVLPLKLEKQERENQEQQLAVEVASSKVEPVSLPEDQKAEASIKVEEQESTREIVKEVIKDVAATPPTETLKLVINRNMLDKREKSHSPQMSSKSSSKSSPCTPVSSPSEPNIKLKIDLSKQNSVTIIDMSDPERREIVKPLKPEKESRSKKKDKDGSPKSSSSSSSSSSGERKRKSPSPLTVPPLTIRTERIMSPSGVSTLSPRVTSGAFSEDPKSEFLKSFALKPIKVKVESPERTLNNRAITPPSPSVQQSASPKSKGNNLDDSILMKPPSCMPPKSIASSKRKSKEPVKAVSKKQKLSPPLPTVDFKIRLPVTNGNSSGTASPKIEKPLMPPPAKPPMLAPRKLQPSAQFAPPPSPIHHHAGVQMSAPGNRTPIAKRYQPILPKASRPNPFANIPNDVNRLLKDAGTEIKSIGGGSVENNSNAAQKPHLYGPKGESKMGPPALPATTPSQGNKNVGKQAGNLPMSAPPNKGNSSNNYLNLALFNSSKCKGKEAPPGCRTPMYTPNSPIYSPSSPQYVPSYNIPTMPTYKYTPKPTPNSGSGNGGSGSYLQNMLGGGNGGSLGGLFPSPPTKSDQNTNPAQGGGGSSSATQSGGNNGIVNNNIYMPNEDAPEKQQVKVKSLLNSCNINIPSSLSITISRDNGDSSSPNNGQHPKHKSPVNNYIEIVKLPDQPQDQVQAAKEAQKRQSPPAAVPGHLAAKLPPPPPSKAIPSPQHLVSRMTPPQLPKVATPPPPSSPRVITPPKTSPPANAAKVTPLKPVLTPTQVDKKTPSPEKRTAAQMGSHSPTASENKSPKGGPAGVANSTGGAQNGDPAAKKFRPILPRQNGMPELAPKLPTLAPFVGFNPLQNPAAGKKVPPSKKSPNAGAAAHQSGQQKLVNGGQSQPAQQKTSPPAQKNQQQVKKVSKNPTPPPPSLPAVGKMMPHPVMHSQNAPLSIASSASAAAVASGQLDLSNFLKENLRRVHAAQAAQAAQVAAAANQSNMMYNLAQMGHMTPAMYNYQQAYFREQLSRMQRVGNEVFNDYLQKLKTAAATGGGGPVEGELKPMLPTVTLPSPGATPPAASPKTSPLPAGKLTAAATAPQTKGNSSSGAANARQQTAATGNNGATVPAASLPPATKSK.

Disordered regions lie at residues 1–91 and 165–245; these read MMTP…TTTT and NGIK…DLAT. Low complexity-rich tracts occupy residues 8–91 and 182–198; these read AIQP…TTTT and SSSS…SSSS. Residues 199–215 show a composition bias toward polar residues; that stretch reads WPTTRRATSEDASSNGG. A compositionally biased stretch (low complexity) spans 228-245; it reads TAAVAASSTATTTSDLAT. The segment at 263-302 adopts an RING-type zinc-finger fold; the sequence is CHLCQGYLINATTIVECLHSFCHSCLINHLRKERFCPRCE. Disordered stretches follow at residues 561–693, 711–856, 895–960, 1011–1097, 1116–1315, 1330–1408, and 1512–1601; these read KREK…FSED, VESP…NRTP, IGGG…SNNY, YKYT…EKQQ, SITI…LAPK, NPAA…HPVM, and AATG…TKSK. Residues 567–590 show a composition bias toward low complexity; the sequence is SPQMSSKSSSKSSPCTPVSSPSEP. A compositionally biased stretch (basic and acidic residues) spans 611–637; the sequence is DPERREIVKPLKPEKESRSKKKDKDGS. The segment covering 638-649 has biased composition (low complexity); that stretch reads PKSSSSSSSSSS. S656 and S658 each carry phosphoserine. Residues 676 to 689 show a composition bias toward polar residues; the sequence is SGVSTLSPRVTSGA. The segment covering 729 to 739 has biased composition (low complexity); sequence SVQQSASPKSK. The span at 812–822 shows a compositional bias: pro residues; that stretch reads LMPPPAKPPML. The segment covering 929–938 has biased composition (polar residues); it reads TTPSQGNKNV. A compositionally biased stretch (low complexity) spans 1011-1022; it reads YKYTPKPTPNSG. Over residues 1036–1045 the composition is skewed to gly residues; that stretch reads LGGGNGGSLG. The span at 1069–1085 shows a compositional bias: low complexity; the sequence is SSATQSGGNNGIVNNNI. Over residues 1116–1133 the composition is skewed to polar residues; the sequence is SITISRDNGDSSSPNNGQ. S1139 carries the phosphoserine modification. The segment covering 1204-1217 has biased composition (pro residues); the sequence is PQLPKVATPPPPSS. Residues T1222, T1236, and T1251 each carry the phosphothreonine modification. The segment covering 1247 to 1258 has biased composition (basic and acidic residues); sequence VDKKTPSPEKRT. 3 positions are modified to phosphoserine: S1253, S1266, and S1274. Polar residues predominate over residues 1261–1272; that stretch reads QMGSHSPTASEN. Polar residues-rich tracts occupy residues 1352-1375 and 1561-1587; these read QSGQ…SPPA and APQT…NNGA.

As to quaternary structure, component of PRC1 complex, which contains many PcG proteins like Pc, ph, Scm, Psc, Sce and also chromatin-remodeling proteins such as histone deacetylases. This complex is distinct from the Esc/E(z) complex, at least composed of esc, E(z), Su(z)12, HDAC1/Rpd3 and Caf1-55. The 2 complexes however cooperate and interact together during the first 3 hours of development to establish PcG silencing.

It localises to the nucleus. Functionally, polycomb group (PcG) protein. PcG proteins act by forming multiprotein complexes, which are required to maintain the transcriptionally repressive state of homeotic genes throughout development. PcG proteins are not required to initiate repression, but to maintain it during later stages of development. Component of the PcG multiprotein PRC1 complex, a complex that acts via chromatin remodeling and modification of histones; it mediates monoubiquitination of histone H2A 'Lys-118', rendering chromatin heritably changed in its expressibility. Needed to maintain expression patterns of the homeotic selector genes of the Antennapedia (Antp-C) and Bithorax (BX-C) complexes, and hence for the maintenance of segmental determination. The chain is Polycomb group protein Psc (Psc) from Drosophila melanogaster (Fruit fly).